A 346-amino-acid chain; its full sequence is Blue-light-activated histidine kinase 2 (346 aa).

The region spanning 8–82 (HDKEAWGRLP…KAIRNCEEVE (75 aa)) is the PAS domain. The residue at position 55 (Cys55) is an S-4a-FMN cysteine. The region spanning 79–133 (EEVEETIYNYRADGEGFWNHLLMGPLEDQDEKCRYFVGIQVDMGQSESPDRATEL) is the PAC domain. The region spanning 139 to 334 (EVQHRVKNHL…IVNIDIPLSQ (196 aa)) is the Histidine kinase domain. His142 bears the Phosphohistidine; by autocatalysis mark.

In terms of processing, FMN binds covalently to cysteine after exposure to blue light and this bond is spontaneously broken in the dark.

It carries out the reaction ATP + protein L-histidine = ADP + protein N-phospho-L-histidine.. Functionally, photosensitive kinase that is involved in increased bacterial virulence upon exposure to light. The chain is Blue-light-activated histidine kinase 2 from Erythrobacter litoralis (strain HTCC2594).